The chain runs to 260 residues: Proliferating cell nuclear antigen (260 aa).

Residues 61–80 (RCDRNISMGMNLGSMSKILI) mediate DNA binding.

This sequence belongs to the PCNA family. Homotrimer. Forms a complex with activator 1 heteropentamer in the presence of ATP.

The protein localises to the nucleus. In terms of biological role, this protein is an auxiliary protein of DNA polymerase delta and is involved in the control of eukaryotic DNA replication by increasing the polymerase's processibility during elongation of the leading strand. The chain is Proliferating cell nuclear antigen (PCNA) from Bombyx mori (Silk moth).